We begin with the raw amino-acid sequence, 381 residues long: Spermidine/putrescine import ATP-binding protein PotA (381 aa).

Residues 22-252 (VELRNVFKFF…PKTSFVADFI (231 aa)) form the ABC transporter domain. 54-61 (GPSGCGKT) lines the ATP pocket.

This sequence belongs to the ABC transporter superfamily. Spermidine/putrescine importer (TC 3.A.1.11.1) family. In terms of assembly, the complex is composed of two ATP-binding proteins (PotA), two transmembrane proteins (PotB and PotC) and a solute-binding protein (PotD).

The protein localises to the cell inner membrane. The enzyme catalyses ATP + H2O + polyamine-[polyamine-binding protein]Side 1 = ADP + phosphate + polyamineSide 2 + [polyamine-binding protein]Side 1.. Part of the ABC transporter complex PotABCD involved in spermidine/putrescine import. Responsible for energy coupling to the transport system. This is Spermidine/putrescine import ATP-binding protein PotA from Nostoc sp. (strain PCC 7120 / SAG 25.82 / UTEX 2576).